Here is a 143-residue protein sequence, read N- to C-terminus: Hemoglobin subunit alpha-1 (143 aa).

Residue Ser2 is modified to N-acetylserine. In terms of domain architecture, Globin spans 2-143 (SLTAKDKDTV…LSRALAEKYR (142 aa)). An O2-binding site is contributed by His60. His89 serves as a coordination point for heme b.

The protein belongs to the globin family. Hb1 is a heterotetramer of two alpha-1 chains and two beta-1 chains. As to expression, red blood cells.

Involved in oxygen transport from gills to the various peripheral tissues. This chain is Hemoglobin subunit alpha-1 (hba1), found in Anarhichas minor (Arctic spotted wolffish).